A 170-amino-acid chain; its full sequence is Flavodoxin (170 aa).

In terms of domain architecture, Flavodoxin-like spans 4–165; sequence IGLFYGTQTG…RVKTWVSEIK (162 aa).

This sequence belongs to the flavodoxin family. FMN serves as cofactor.

Its function is as follows. Low-potential electron donor to a number of redox enzymes. The sequence is that of Flavodoxin (isiB) from Synechocystis sp. (strain ATCC 27184 / PCC 6803 / Kazusa).